We begin with the raw amino-acid sequence, 226 residues long: Ribosomal RNA small subunit methyltransferase Nep1 (226 aa).

S-adenosyl-L-methionine-binding positions include Gly176, Gly181, and 197 to 202 (IYEESL).

This sequence belongs to the class IV-like SAM-binding methyltransferase superfamily. RNA methyltransferase NEP1 family. Homodimer.

The catalysed reaction is a pseudouridine in rRNA + S-adenosyl-L-methionine = an N(1)-methylpseudouridine in rRNA + S-adenosyl-L-homocysteine + H(+). Methyltransferase involved in ribosomal biogenesis. Specifically catalyzes the N1-methylation of the pseudouridine corresponding to position 914 in M.jannaschii 16S rRNA. The chain is Ribosomal RNA small subunit methyltransferase Nep1 from Methanothrix thermoacetophila (strain DSM 6194 / JCM 14653 / NBRC 101360 / PT) (Methanosaeta thermophila).